Here is a 259-residue protein sequence, read N- to C-terminus: Deoxyribose-phosphate aldolase (259 aa).

Residue Asp102 is the Proton donor/acceptor of the active site. Residue Lys167 is the Schiff-base intermediate with acetaldehyde of the active site. Lys201 functions as the Proton donor/acceptor in the catalytic mechanism.

Belongs to the DeoC/FbaB aldolase family. DeoC type 2 subfamily.

It localises to the cytoplasm. The catalysed reaction is 2-deoxy-D-ribose 5-phosphate = D-glyceraldehyde 3-phosphate + acetaldehyde. It functions in the pathway carbohydrate degradation; 2-deoxy-D-ribose 1-phosphate degradation; D-glyceraldehyde 3-phosphate and acetaldehyde from 2-deoxy-alpha-D-ribose 1-phosphate: step 2/2. Functionally, catalyzes a reversible aldol reaction between acetaldehyde and D-glyceraldehyde 3-phosphate to generate 2-deoxy-D-ribose 5-phosphate. This chain is Deoxyribose-phosphate aldolase, found in Proteus mirabilis (strain HI4320).